We begin with the raw amino-acid sequence, 310 residues long: Putative S-adenosyl-L-methionine-dependent methyltransferase ML2640 (310 aa).

S-adenosyl-L-methionine is bound by residues Asp-132 and 161–162 (DL).

The protein belongs to the UPF0677 family.

Functionally, exhibits S-adenosyl-L-methionine-dependent methyltransferase activity. The sequence is that of Putative S-adenosyl-L-methionine-dependent methyltransferase ML2640 from Mycobacterium leprae (strain TN).